Reading from the N-terminus, the 661-residue chain is tRNA uridine 5-carboxymethylaminomethyl modification enzyme MnmG (661 aa).

FAD is bound by residues G16 to G21, V128, and S183. Residues P206–F230 form a disordered region. The span at S216–F230 shows a compositional bias: basic and acidic residues. G277–F291 is a binding site for NAD(+). Q374 serves as a coordination point for FAD.

This sequence belongs to the MnmG family. Homodimer. Heterotetramer of two MnmE and two MnmG subunits. It depends on FAD as a cofactor.

It localises to the cytoplasm. In terms of biological role, NAD-binding protein involved in the addition of a carboxymethylaminomethyl (cmnm) group at the wobble position (U34) of certain tRNAs, forming tRNA-cmnm(5)s(2)U34. This chain is tRNA uridine 5-carboxymethylaminomethyl modification enzyme MnmG, found in Lactobacillus helveticus (strain DPC 4571).